Reading from the N-terminus, the 512-residue chain is GMP synthase [glutamine-hydrolyzing] (512 aa).

Residues 7–197 (TIIVLDFGSQ…VFGVCGCSEG (191 aa)) form the Glutamine amidotransferase type-1 domain. The Nucleophile role is filled by Cys-84. Residues His-171 and Glu-173 contribute to the active site. The 190-residue stretch at 198–387 (WNMENFIEVE…LGIPDEIVWR (190 aa)) folds into the GMPS ATP-PPase domain. 225–231 (SGGVDSS) is a binding site for ATP.

Homodimer.

It catalyses the reaction XMP + L-glutamine + ATP + H2O = GMP + L-glutamate + AMP + diphosphate + 2 H(+). The protein operates within purine metabolism; GMP biosynthesis; GMP from XMP (L-Gln route): step 1/1. Catalyzes the synthesis of GMP from XMP. This is GMP synthase [glutamine-hydrolyzing] from Bacillus cereus (strain B4264).